Here is an 86-residue protein sequence, read N- to C-terminus: Large ribosomal subunit protein bL27 (86 aa).

Residues 1–24 (MAHKKAGGSSRNGRDSEGRRLGVK) form a disordered region.

The protein belongs to the bacterial ribosomal protein bL27 family.

The protein is Large ribosomal subunit protein bL27 of Magnetococcus marinus (strain ATCC BAA-1437 / JCM 17883 / MC-1).